Reading from the N-terminus, the 307-residue chain is Ribosomal RNA small subunit methyltransferase H (307 aa).

Residues 33–35 (GGY), aspartate 51, phenylalanine 82, aspartate 96, and glutamine 103 contribute to the S-adenosyl-L-methionine site.

This sequence belongs to the methyltransferase superfamily. RsmH family.

The protein localises to the cytoplasm. The catalysed reaction is cytidine(1402) in 16S rRNA + S-adenosyl-L-methionine = N(4)-methylcytidine(1402) in 16S rRNA + S-adenosyl-L-homocysteine + H(+). Functionally, specifically methylates the N4 position of cytidine in position 1402 (C1402) of 16S rRNA. In Rickettsia massiliae (strain Mtu5), this protein is Ribosomal RNA small subunit methyltransferase H.